Consider the following 210-residue polypeptide: Cytochrome c4 (210 aa).

The N-terminal stretch at 1 to 20 is a signal peptide; sequence MNKVLVSLLLTLGITGMAHA. Heme c is bound by residues Cys-34, Cys-37, His-38, Met-86, Cys-139, Cys-142, His-143, and Met-187.

Binds 2 heme c groups covalently per subunit.

It is found in the periplasm. Its function is as follows. Diheme, high potential cytochrome c believed to be an intermediate electron donor to terminal oxidation systems. The sequence is that of Cytochrome c4 (cc4) from Stutzerimonas stutzeri (Pseudomonas stutzeri).